The following is a 337-amino-acid chain: Holliday junction branch migration complex subunit RuvB (337 aa).

The large ATPase domain (RuvB-L) stretch occupies residues 1–179 (MTHQVSVLHQ…FSFTGRVAYY (179 aa)). ATP contacts are provided by residues leucine 18, arginine 19, glycine 60, lysine 63, threonine 64, serine 65, 126-128 (EDY), arginine 169, tyrosine 179, and arginine 216. Mg(2+) is bound at residue threonine 64. The tract at residues 180 to 250 (SDEDLATILR…VAEKALAMLL (71 aa)) is small ATPAse domain (RuvB-S). The head domain (RuvB-H) stretch occupies residues 253-337 (EWGLNEIDIK…DNLQSLGEEK (85 aa)). DNA is bound by residues lysine 308 and arginine 313.

It belongs to the RuvB family. Homohexamer. Forms an RuvA(8)-RuvB(12)-Holliday junction (HJ) complex. HJ DNA is sandwiched between 2 RuvA tetramers; dsDNA enters through RuvA and exits via RuvB. An RuvB hexamer assembles on each DNA strand where it exits the tetramer. Each RuvB hexamer is contacted by two RuvA subunits (via domain III) on 2 adjacent RuvB subunits; this complex drives branch migration. In the full resolvosome a probable DNA-RuvA(4)-RuvB(12)-RuvC(2) complex forms which resolves the HJ.

It localises to the cytoplasm. The enzyme catalyses ATP + H2O = ADP + phosphate + H(+). The RuvA-RuvB-RuvC complex processes Holliday junction (HJ) DNA during genetic recombination and DNA repair, while the RuvA-RuvB complex plays an important role in the rescue of blocked DNA replication forks via replication fork reversal (RFR). RuvA specifically binds to HJ cruciform DNA, conferring on it an open structure. The RuvB hexamer acts as an ATP-dependent pump, pulling dsDNA into and through the RuvAB complex. RuvB forms 2 homohexamers on either side of HJ DNA bound by 1 or 2 RuvA tetramers; 4 subunits per hexamer contact DNA at a time. Coordinated motions by a converter formed by DNA-disengaged RuvB subunits stimulates ATP hydrolysis and nucleotide exchange. Immobilization of the converter enables RuvB to convert the ATP-contained energy into a lever motion, pulling 2 nucleotides of DNA out of the RuvA tetramer per ATP hydrolyzed, thus driving DNA branch migration. The RuvB motors rotate together with the DNA substrate, which together with the progressing nucleotide cycle form the mechanistic basis for DNA recombination by continuous HJ branch migration. Branch migration allows RuvC to scan DNA until it finds its consensus sequence, where it cleaves and resolves cruciform DNA. The sequence is that of Holliday junction branch migration complex subunit RuvB from Chlamydia abortus (strain DSM 27085 / S26/3) (Chlamydophila abortus).